Here is a 267-residue protein sequence, read N- to C-terminus: DNA damage-regulated autophagy modulator protein 2 (267 aa).

The next 6 membrane-spanning stretches (helical) occupy residues 8 to 28 (LSFL…FSYI), 53 to 73 (RCLF…TIYV), 87 to 107 (LIIK…LGLS), 118 to 138 (FIVH…YMFV), 160 to 180 (LLLV…SSIL), and 203 to 223 (VLHI…FGFF).

It belongs to the DRAM/TMEM150 family.

The protein localises to the lysosome membrane. The protein resides in the photoreceptor inner segment. Its subcellular location is the apical cell membrane. Plays a role in the initiation of autophagy. In the retina, might be involved in the process of photoreceptor cells renewal and recycling to preserve visual function. Induces apoptotic cell death when coexpressed with DRAM1. The protein is DNA damage-regulated autophagy modulator protein 2 (Dram2) of Rattus norvegicus (Rat).